A 458-amino-acid chain; its full sequence is Alpha-2C adrenergic receptor (458 aa).

The Extracellular portion of the chain corresponds to 1-51 (MASPALAAALAAAAAEGPNGSDAGEWGSGGGANASGTDWVPPPGQYSAGAV). N19 and N33 each carry an N-linked (GlcNAc...) asparagine glycan. Residues 52 to 76 (AGLAAVVGFLIVFTVVGNVLVVIAV) form a helical membrane-spanning segment. The Cytoplasmic segment spans residues 77-88 (LTSRALRAPQNL). Residues 89-114 (FLVSLASADILVATLVMPFSLANELM) form a helical membrane-spanning segment. The Extracellular portion of the chain corresponds to 115–124 (AYWYFGQVWC). An intrachain disulfide couples C124 to C202. Residues 125–147 (GVYLALDVLFCTSSIVHLCAISL) form a helical membrane-spanning segment. The Cytoplasmic portion of the chain corresponds to 148 to 168 (DRYWSVTQAVEYNLKRTPRRV). Residues 169–191 (KATIVAVWLISAVISFPPLVSFY) traverse the membrane as a helical segment. Over 192 to 207 (RRPDGAAYPQCGLNDE) the chain is Extracellular. Residues 208-231 (TWYILSSCIGSFFAPCLIMGLVYA) traverse the membrane as a helical segment. Residues 232-379 (RIYRVAKLRT…QAREKRFTFV (148 aa)) are Cytoplasmic-facing. The interval 245-343 (SEKRGPAGPD…SPGPGGRLSR (99 aa)) is disordered. A compositionally biased stretch (basic residues) spans 291 to 303 (RRRRRGALRRGGR). Residues 380-403 (LAVVMGVFVLCWFPFFFSYSLYGI) form a helical membrane-spanning segment. The Extracellular portion of the chain corresponds to 404-416 (CREACQLPEPLFK). The helical transmembrane segment at 417 to 437 (FFFWIGYCNSSLNPVIYTVFN) threads the bilayer. Over 438-458 (QDFRRSFKHILFRRRRRGFRQ) the chain is Cytoplasmic.

This sequence belongs to the G-protein coupled receptor 1 family. Adrenergic receptor subfamily. ADRA2C sub-subfamily.

It is found in the cell membrane. In terms of biological role, alpha-2 adrenergic receptors mediate the catecholamine-induced inhibition of adenylate cyclase through the action of G proteins. This Mus musculus (Mouse) protein is Alpha-2C adrenergic receptor (Adra2c).